An 81-amino-acid chain; its full sequence is ATP synthase subunit c, chloroplastic (81 aa).

A run of 2 helical transmembrane segments spans residues 3–23 (PLIS…ASIG) and 57–77 (LAFM…LLFA).

The protein belongs to the ATPase C chain family. As to quaternary structure, F-type ATPases have 2 components, F(1) - the catalytic core - and F(0) - the membrane proton channel. F(1) has five subunits: alpha(3), beta(3), gamma(1), delta(1), epsilon(1). F(0) has four main subunits: a(1), b(1), b'(1) and c(10-14). The alpha and beta chains form an alternating ring which encloses part of the gamma chain. F(1) is attached to F(0) by a central stalk formed by the gamma and epsilon chains, while a peripheral stalk is formed by the delta, b and b' chains.

The protein resides in the plastid. It is found in the chloroplast thylakoid membrane. In terms of biological role, f(1)F(0) ATP synthase produces ATP from ADP in the presence of a proton or sodium gradient. F-type ATPases consist of two structural domains, F(1) containing the extramembraneous catalytic core and F(0) containing the membrane proton channel, linked together by a central stalk and a peripheral stalk. During catalysis, ATP synthesis in the catalytic domain of F(1) is coupled via a rotary mechanism of the central stalk subunits to proton translocation. Functionally, key component of the F(0) channel; it plays a direct role in translocation across the membrane. A homomeric c-ring of between 10-14 subunits forms the central stalk rotor element with the F(1) delta and epsilon subunits. The polypeptide is ATP synthase subunit c, chloroplastic (Acorus calamus var. americanus (American sweet flag)).